The sequence spans 366 residues: Ribosomal RNA large subunit methyltransferase M (366 aa).

S-adenosyl-L-methionine contacts are provided by residues serine 188, 221–224, aspartate 240, aspartate 260, and aspartate 277; that span reads CPGG. Catalysis depends on lysine 306, which acts as the Proton acceptor.

This sequence belongs to the class I-like SAM-binding methyltransferase superfamily. RNA methyltransferase RlmE family. RlmM subfamily. In terms of assembly, monomer.

It is found in the cytoplasm. The enzyme catalyses cytidine(2498) in 23S rRNA + S-adenosyl-L-methionine = 2'-O-methylcytidine(2498) in 23S rRNA + S-adenosyl-L-homocysteine + H(+). Catalyzes the 2'-O-methylation at nucleotide C2498 in 23S rRNA. In Sodalis glossinidius (strain morsitans), this protein is Ribosomal RNA large subunit methyltransferase M.